We begin with the raw amino-acid sequence, 128 residues long: Large ribosomal subunit protein bL19 (128 aa).

Belongs to the bacterial ribosomal protein bL19 family.

This protein is located at the 30S-50S ribosomal subunit interface and may play a role in the structure and function of the aminoacyl-tRNA binding site. The sequence is that of Large ribosomal subunit protein bL19 from Azoarcus sp. (strain BH72).